The primary structure comprises 172 residues: MLDAFAKVVAQADARGEFLSNTQIDALSKMVKEGNQRLDIVNKVTSNASAIVTNSARALFAEQPQLIQPGGNAYTSRNMAACLRDMEIVLRYVSYAMLAGDSSVLDDRCLNGLRETYQALGTPGSSVAVAIQKMKDASVALANDTTGTPIGDCSSLVAELAGYFDRAAVSVV.

An N4-methylasparagine modification is found at Asn-72. Cys-82 contributes to the (2R,3E)-phycocyanobilin binding site. A (2R,3E)-phycoerythrobilin-binding site is contributed by Cys-153.

Belongs to the phycobiliprotein family. In terms of assembly, heterodimer of an alpha and a beta chain. Dimers further assemble into trimers and the trimers into hexamers. The basic functional unit of phycobiliproteins is a ring-shaped hexamer formed from two back-to-back trimers contacting via the alpha chain subunits. The trimers are composed of alpha/beta subunit heterodimers arranged around a three-fold axis of symmetry. The phycoerythrins also contain a gamma subunit which is located in the center of the hexamer. In terms of processing, contains two covalently linked bilin chromophores.

The protein resides in the plastid. It is found in the chloroplast thylakoid membrane. Functionally, light-harvesting photosynthetic bile pigment-protein from the phycobiliprotein complex (phycobilisome, PBS). Phycocyanin is the major phycobiliprotein in the PBS rod. This Porphyridium purpureum (Red alga) protein is R-phycocyanin-1 beta chain (rpcB).